A 92-amino-acid polypeptide reads, in one-letter code: Small ribosomal subunit protein uS19 (92 aa).

This sequence belongs to the universal ribosomal protein uS19 family.

Its function is as follows. Protein S19 forms a complex with S13 that binds strongly to the 16S ribosomal RNA. The sequence is that of Small ribosomal subunit protein uS19 from Chromobacterium violaceum (strain ATCC 12472 / DSM 30191 / JCM 1249 / CCUG 213 / NBRC 12614 / NCIMB 9131 / NCTC 9757 / MK).